Consider the following 522-residue polypeptide: Lysine--tRNA ligase (522 aa).

The short motif at 44-52 (PSGLPHIGT) is the 'HIGH' region element. The 'KMSKS' region signature appears at 290-294 (KISKS). Lys293 contacts ATP.

This sequence belongs to the class-I aminoacyl-tRNA synthetase family.

Its subcellular location is the cytoplasm. It carries out the reaction tRNA(Lys) + L-lysine + ATP = L-lysyl-tRNA(Lys) + AMP + diphosphate. This is Lysine--tRNA ligase from Rickettsia africae (strain ESF-5).